The sequence spans 208 residues: uncharacterized protein (208 aa).

Disordered stretches follow at residues 1–78 (MDLF…SPTE) and 154–208 (RRRS…PRNY). Positions 40 to 51 (KNHKKAQPRRTT) are enriched in basic residues. Polar residues predominate over residues 179-197 (ANSSSPNPTATGSETSYGS).

This is an uncharacterized protein from Caenorhabditis elegans.